The sequence spans 37 residues: QVYWRHPGEYGKEDVLICHVSNFHPPDITITLLKNGE.

One can recognise an Ig-like C1-type domain in the interval 11-37; that stretch reads GKEDVLICHVSNFHPPDITITLLKNGE.

Belongs to the beta-2-microglobulin family. In terms of assembly, heterodimer of an alpha chain and a beta chain. Beta-2-microglobulin is the beta-chain of major histocompatibility complex class I molecules.

It is found in the secreted. Component of the class I major histocompatibility complex (MHC). Involved in the presentation of peptide antigens to the immune system. The sequence is that of Beta-2-microglobulin (b2m) from Oreochromis niloticus (Nile tilapia).